A 490-amino-acid chain; its full sequence is Cytochrome P450 2C2 (490 aa).

Cys435 is a heme binding site.

It belongs to the cytochrome P450 family. Requires heme as cofactor.

It localises to the endoplasmic reticulum membrane. Its subcellular location is the microsome membrane. The enzyme catalyses an organic molecule + reduced [NADPH--hemoprotein reductase] + O2 = an alcohol + oxidized [NADPH--hemoprotein reductase] + H2O + H(+). Its function is as follows. Cytochromes P450 are a group of heme-thiolate monooxygenases. In liver microsomes, this enzyme is involved in an NADPH-dependent electron transport pathway. It oxidizes a variety of structurally unrelated compounds, including steroids, fatty acids, and xenobiotics. In the epoxidation of arachidonic acid it generates only 14,15- and 11,12-cis-epoxyeicosatrienoic acids. In Oryctolagus cuniculus (Rabbit), this protein is Cytochrome P450 2C2 (CYP2C2).